The primary structure comprises 221 residues: Phosphoribosylformylglycinamidine synthase subunit PurQ (221 aa).

The 220-residue stretch at 2–221 (NVGVIVFPGS…FAGLLEPVAA (220 aa)) folds into the Glutamine amidotransferase type-1 domain. The active-site Nucleophile is Cys-86. Active-site residues include His-194 and Glu-196.

As to quaternary structure, part of the FGAM synthase complex composed of 1 PurL, 1 PurQ and 2 PurS subunits.

The protein localises to the cytoplasm. The catalysed reaction is N(2)-formyl-N(1)-(5-phospho-beta-D-ribosyl)glycinamide + L-glutamine + ATP + H2O = 2-formamido-N(1)-(5-O-phospho-beta-D-ribosyl)acetamidine + L-glutamate + ADP + phosphate + H(+). The enzyme catalyses L-glutamine + H2O = L-glutamate + NH4(+). It functions in the pathway purine metabolism; IMP biosynthesis via de novo pathway; 5-amino-1-(5-phospho-D-ribosyl)imidazole from N(2)-formyl-N(1)-(5-phospho-D-ribosyl)glycinamide: step 1/2. In terms of biological role, part of the phosphoribosylformylglycinamidine synthase complex involved in the purines biosynthetic pathway. Catalyzes the ATP-dependent conversion of formylglycinamide ribonucleotide (FGAR) and glutamine to yield formylglycinamidine ribonucleotide (FGAM) and glutamate. The FGAM synthase complex is composed of three subunits. PurQ produces an ammonia molecule by converting glutamine to glutamate. PurL transfers the ammonia molecule to FGAR to form FGAM in an ATP-dependent manner. PurS interacts with PurQ and PurL and is thought to assist in the transfer of the ammonia molecule from PurQ to PurL. The chain is Phosphoribosylformylglycinamidine synthase subunit PurQ from Synechococcus sp. (strain ATCC 27144 / PCC 6301 / SAUG 1402/1) (Anacystis nidulans).